Here is a 5801-residue protein sequence, read N- to C-terminus: uncharacterized protein (5801 aa).

7 disordered regions span residues 1114–1136, 1827–1846, 2040–2109, 3351–3392, 5134–5168, 5478–5573, and 5600–5638; these read DDDN…NKKI, KDRS…SINN, NNGE…SPLF, EKSN…NNSG, DNNN…SESD, ISDP…EDII, and HDKD…ETPG. Low complexity-rich tracts occupy residues 1118–1134, 1831–1846, 2048–2096, 3353–3392, and 5135–5153; these read NNSN…NNNK, SSSS…SINN, QQLQ…QQQQ, SNNN…NNSG, and NNNN…NNNN. The segment covering 5496–5573 has biased composition (acidic residues); it reads DNEEEEEDDD…EDEDEDEDII (78 aa). The segment covering 5617–5629 has biased composition (basic and acidic residues); that stretch reads QQPEKPQQPEKPQ.

This is an uncharacterized protein from Dictyostelium discoideum (Social amoeba).